We begin with the raw amino-acid sequence, 281 residues long: ATP synthase subunit a (281 aa).

Helical transmembrane passes span 50–70 (FSFT…LLLV), 116–136 (FFPC…QGMI), 145–165 (HFLI…IVGF), 172–192 (FLSF…LVLL), 219–239 (VKIL…FYFI), and 246–266 (FIVL…AYVF).

It belongs to the ATPase A chain family. F-type ATPases have 2 components, CF(1) - the catalytic core - and CF(0) - the membrane proton channel. CF(1) has five subunits: alpha(3), beta(3), gamma(1), delta(1), epsilon(1). CF(0) has three main subunits: a, b and c.

It localises to the mitochondrion inner membrane. In terms of biological role, mitochondrial membrane ATP synthase (F(1)F(0) ATP synthase or Complex V) produces ATP from ADP in the presence of a proton gradient across the membrane which is generated by electron transport complexes of the respiratory chain. F-type ATPases consist of two structural domains, F(1) - containing the extramembraneous catalytic core and F(0) - containing the membrane proton channel, linked together by a central stalk and a peripheral stalk. During catalysis, ATP synthesis in the catalytic domain of F(1) is coupled via a rotary mechanism of the central stalk subunits to proton translocation. Key component of the proton channel; it may play a direct role in the translocation of protons across the membrane. The chain is ATP synthase subunit a (ATP6) from Oenothera berteroana (Bertero's evening primrose).